A 710-amino-acid chain; its full sequence is DNA ligase (710 aa).

The interval 1-26 is disordered; sequence MPEDAIGQQVPPEQEAAGAEPTSAAR. NAD(+) contacts are provided by residues 53–57, 102–103, and glutamate 132; these read DAEFD and SL. Residue lysine 134 is the N6-AMP-lysine intermediate of the active site. NAD(+) contacts are provided by arginine 155, glutamate 196, lysine 312, and lysine 336. Residues cysteine 430, cysteine 433, cysteine 449, and cysteine 455 each contribute to the Zn(2+) site. The BRCT domain maps to 619–708; sequence EGPRPLEGMT…PDAAREVARV (90 aa).

This sequence belongs to the NAD-dependent DNA ligase family. LigA subfamily. Requires Mg(2+) as cofactor. Mn(2+) serves as cofactor.

The enzyme catalyses NAD(+) + (deoxyribonucleotide)n-3'-hydroxyl + 5'-phospho-(deoxyribonucleotide)m = (deoxyribonucleotide)n+m + AMP + beta-nicotinamide D-nucleotide.. DNA ligase that catalyzes the formation of phosphodiester linkages between 5'-phosphoryl and 3'-hydroxyl groups in double-stranded DNA using NAD as a coenzyme and as the energy source for the reaction. It is essential for DNA replication and repair of damaged DNA. The protein is DNA ligase of Salinispora arenicola (strain CNS-205).